The sequence spans 473 residues: Pyruvate kinase (473 aa).

Residue Arg-32 participates in substrate binding. Positions 34, 36, 66, and 67 each coordinate K(+). Residue 34-37 participates in ATP binding; the sequence is NFSH. Arg-73 and Lys-155 together coordinate ATP. Glu-221 serves as a coordination point for Mg(2+). Residues Gly-244, Asp-245, and Thr-277 each contribute to the substrate site. Asp-245 contacts Mg(2+).

It belongs to the pyruvate kinase family. As to quaternary structure, homotetramer. It depends on Mg(2+) as a cofactor. K(+) serves as cofactor.

The catalysed reaction is pyruvate + ATP = phosphoenolpyruvate + ADP + H(+). Its pathway is carbohydrate degradation; glycolysis; pyruvate from D-glyceraldehyde 3-phosphate: step 5/5. This chain is Pyruvate kinase (pyk), found in Clostridium acetobutylicum (strain ATCC 824 / DSM 792 / JCM 1419 / IAM 19013 / LMG 5710 / NBRC 13948 / NRRL B-527 / VKM B-1787 / 2291 / W).